The following is a 139-amino-acid chain: Low molecular weight protein-tyrosine-phosphatase PtpB (139 aa).

The active-site Nucleophile is the Cys-7. The active site involves Arg-13. Asp-111 acts as the Proton donor in catalysis.

It belongs to the low molecular weight phosphotyrosine protein phosphatase family.

It carries out the reaction O-phospho-L-tyrosyl-[protein] + H2O = L-tyrosyl-[protein] + phosphate. Functionally, dephosphorylates the phosphotyrosine-containing proteins. The protein is Low molecular weight protein-tyrosine-phosphatase PtpB (ptpB) of Staphylococcus epidermidis (strain ATCC 35984 / DSM 28319 / BCRC 17069 / CCUG 31568 / BM 3577 / RP62A).